Reading from the N-terminus, the 332-residue chain is dTDP-3,4-didehydro-2,6-dideoxy-alpha-D-glucose 3-reductase (332 aa).

NADP(+) is bound at residue 17–23; sequence CADIAWR. Residue Arg-24 participates in substrate binding. NADP(+)-binding positions include 42-43, Tyr-63, Leu-79, and His-84; that span reads SR. Residue Lys-102 is the Proton donor of the active site. NADP(+) contacts are provided by Arg-170 and Asp-182. Substrate contacts are provided by Tyr-240 and Thr-260.

It belongs to the Gfo/Idh/MocA family. In terms of assembly, homotetramer; dimer of dimers.

The catalysed reaction is dTDP-4-dehydro-2,6-dideoxy-alpha-D-glucose + NADP(+) = dTDP-3,4-didehydro-2,6-dideoxy-alpha-D-glucose + NADPH + H(+). It functions in the pathway antibiotic biosynthesis. In terms of biological role, involved in the biosynthesis of L-digitoxose, an unusual dideoxysugar attached to various pharmacologically active natural products, including the antitumor antibiotic tetrocarcin A, and the antibiotics kijanimicin and jadomycin B. Catalyzes the reduction of the C-3 keto moiety of dTDP-3,4-diketo-2,6-dideoxy-alpha-D-glucose to yield dTDP-4-keto-2,6-dideoxy-alpha-D-glucose. Also able to reduce dTDP-3-keto-6-deoxy-D-galactose and dTDP-3-keto-6-deoxy-D-glucose to yield dTDP-fucose and dTDP-quinovose, respectively. This Actinomadura kijaniata protein is dTDP-3,4-didehydro-2,6-dideoxy-alpha-D-glucose 3-reductase.